The chain runs to 58 residues: AFAGVLADADIKAALAGCAAAESFNYKTFFKFFAIIDQDHSGFIEEEELKALSDAETK.

Alanine 1 carries the post-translational modification N-acetylalanine. The EF-hand domain maps to 24-58 (FNYKTFFKFFAIIDQDHSGFIEEEELKALSDAETK). Ca(2+) is bound by residues aspartate 37, aspartate 39, serine 41, phenylalanine 43, glutamate 45, and glutamate 48.

It belongs to the parvalbumin family.

Functionally, in muscle, parvalbumin is thought to be involved in relaxation after contraction. It binds two calcium ions. In Merluccius senegalensis (Senegalese hake), this protein is Parvalbumin beta 3.